The chain runs to 320 residues: Mitochondrial glycine transporter (320 aa).

Solcar repeat units lie at residues 8-92, 121-205, and 223-307; these read SKTT…LRQG, LSNW…LKRR, and SSSS…LILR. 6 helical membrane passes run 14-39, 67-93, 127-152, 180-203, 227-253, and 282-300; these read FAAG…TRVQ, GTLP…RQGL, LATG…VRYE, GFGA…EQLK, INFV…KTRL, and GLGL…AWTV.

This sequence belongs to the mitochondrial carrier (TC 2.A.29) family. SLC25A38 subfamily.

It localises to the mitochondrion inner membrane. The catalysed reaction is glycine(in) = glycine(out). Its function is as follows. Mitochondrial glycine transporter that imports glycine into the mitochondrial matrix. Plays an important role in providing glycine for the first enzymatic step in heme biosynthesis, the condensation of glycine with succinyl-CoA to produce 5-aminolevulinate (ALA) in the mitochondrial matrix. The protein is Mitochondrial glycine transporter of Aspergillus fumigatus (strain CBS 144.89 / FGSC A1163 / CEA10) (Neosartorya fumigata).